The following is a 156-amino-acid chain: Endoribonuclease YbeY (156 aa).

Zn(2+)-binding residues include His111, His115, and His121.

It belongs to the endoribonuclease YbeY family. Zn(2+) serves as cofactor.

The protein localises to the cytoplasm. Its function is as follows. Single strand-specific metallo-endoribonuclease involved in late-stage 70S ribosome quality control and in maturation of the 3' terminus of the 16S rRNA. This is Endoribonuclease YbeY from Hahella chejuensis (strain KCTC 2396).